The following is a 383-amino-acid chain: Cytochrome b (383 aa).

A run of 4 helical transmembrane segments spans residues 35–55 (FGSI…ILSM), 79–100 (WLFR…YIHI), 115–135 (WGIG…GYVL), and 180–200 (FFSL…LHLF). Heme b-binding residues include H85 and H99. Residues H184 and H198 each contribute to the heme b site. A ubiquinone is bound at residue H203. The next 4 membrane-spanning stretches (helical) occupy residues 228 to 248 (IKDL…NFQF), 290 to 310 (LGGV…IFYN), 321 to 341 (LNKI…WLGK), and 348 to 368 (FTNI…LNFY).

The protein belongs to the cytochrome b family. The main subunits of complex b-c1 are: cytochrome b, cytochrome c1 and the Rieske protein. It depends on heme b as a cofactor.

The protein localises to the mitochondrion inner membrane. Component of the ubiquinol-cytochrome c reductase complex (complex III or cytochrome b-c1 complex) that is part of the mitochondrial respiratory chain. The b-c1 complex mediates electron transfer from ubiquinol to cytochrome c. Contributes to the generation of a proton gradient across the mitochondrial membrane that is then used for ATP synthesis. The polypeptide is Cytochrome b (MT-CYB) (Apis mellifera ligustica (Common honeybee)).